Reading from the N-terminus, the 240-residue chain is Uridylate kinase (240 aa).

12-15 (KLSG) is an ATP binding site. Position 54 (G54) interacts with UMP. Residues G55 and R59 each coordinate ATP. UMP contacts are provided by residues D74 and 135–142 (TGNPFFTT). The ATP site is built by T162, Y168, and D171.

The protein belongs to the UMP kinase family. In terms of assembly, homohexamer.

The protein resides in the cytoplasm. The enzyme catalyses UMP + ATP = UDP + ADP. It participates in pyrimidine metabolism; CTP biosynthesis via de novo pathway; UDP from UMP (UMPK route): step 1/1. With respect to regulation, inhibited by UTP. Functionally, catalyzes the reversible phosphorylation of UMP to UDP. This is Uridylate kinase from Xanthomonas oryzae pv. oryzae (strain KACC10331 / KXO85).